A 316-amino-acid chain; its full sequence is L-lactate dehydrogenase (316 aa).

34-39 (DVVEGV) is a binding site for NAD(+). Residues Arg-89, Asn-121, and Arg-152 each coordinate substrate. An NAD(+)-binding site is contributed by Asn-121. His-172 acts as the Proton acceptor in catalysis.

Belongs to the LDH/MDH superfamily. LDH family. As to quaternary structure, homotetramer.

It catalyses the reaction (S)-lactate + NAD(+) = pyruvate + NADH + H(+). It participates in fermentation; pyruvate fermentation to lactate; (S)-lactate from pyruvate: step 1/1. The chain is L-lactate dehydrogenase from Botryococcus braunii (Green alga).